Consider the following 216-residue polypeptide: Purine nucleoside phosphorylase DeoD-type (216 aa).

Residues arginine 4, arginine 23, and 67 to 70 (RVGT) contribute to the phosphate site. Residues 159-161 (EME) and 183-184 (SD) each bind a purine D-ribonucleoside. Catalysis depends on aspartate 184, which acts as the Proton donor.

Belongs to the PNP/UDP phosphorylase family. In terms of assembly, homohexamer; trimer of homodimers.

The enzyme catalyses a purine D-ribonucleoside + phosphate = a purine nucleobase + alpha-D-ribose 1-phosphate. It carries out the reaction a purine 2'-deoxy-D-ribonucleoside + phosphate = a purine nucleobase + 2-deoxy-alpha-D-ribose 1-phosphate. Its function is as follows. Catalyzes the reversible phosphorolytic breakdown of the N-glycosidic bond in the beta-(deoxy)ribonucleoside molecules, with the formation of the corresponding free purine bases and pentose-1-phosphate. The chain is Purine nucleoside phosphorylase DeoD-type from Streptococcus thermophilus.